The chain runs to 362 residues: Histidinol-phosphate aminotransferase (362 aa).

Position 218 is an N6-(pyridoxal phosphate)lysine (lysine 218).

It belongs to the class-II pyridoxal-phosphate-dependent aminotransferase family. Histidinol-phosphate aminotransferase subfamily. As to quaternary structure, homodimer. Pyridoxal 5'-phosphate serves as cofactor.

It catalyses the reaction L-histidinol phosphate + 2-oxoglutarate = 3-(imidazol-4-yl)-2-oxopropyl phosphate + L-glutamate. The protein operates within amino-acid biosynthesis; L-histidine biosynthesis; L-histidine from 5-phospho-alpha-D-ribose 1-diphosphate: step 7/9. This Ruegeria sp. (strain TM1040) (Silicibacter sp.) protein is Histidinol-phosphate aminotransferase.